The chain runs to 82 residues: Photosystem I iron-sulfur center (82 aa).

2 consecutive 4Fe-4S ferredoxin-type domains span residues 2–31 (AHSVKIYDTCIGCTQCVRACPTDVLEMVPW) and 40–69 (IAAAPRTEDCVGCKRCETACPTDFLSIRVY). 8 residues coordinate [4Fe-4S] cluster: cysteine 11, cysteine 14, cysteine 17, cysteine 21, cysteine 49, cysteine 52, cysteine 55, and cysteine 59.

In terms of assembly, the cyanobacterial PSI reaction center is composed of one copy each of PsaA,B,C,D,E,F,I,J,K,L,M and X, and forms trimeric complexes. Requires [4Fe-4S] cluster as cofactor.

Its subcellular location is the cellular thylakoid membrane. It catalyses the reaction reduced [plastocyanin] + hnu + oxidized [2Fe-2S]-[ferredoxin] = oxidized [plastocyanin] + reduced [2Fe-2S]-[ferredoxin]. In terms of biological role, apoprotein for the two 4Fe-4S centers FA and FB of photosystem I (PSI); essential for photochemical activity. FB is the terminal electron acceptor of PSI, donating electrons to ferredoxin. The C-terminus interacts with PsaA/B/D and helps assemble the protein into the PSI complex. Required for binding of PsaD and PsaE to PSI. PSI is a plastocyanin/cytochrome c6-ferredoxin oxidoreductase, converting photonic excitation into a charge separation, which transfers an electron from the donor P700 chlorophyll pair to the spectroscopically characterized acceptors A0, A1, FX, FA and FB in turn. The protein is Photosystem I iron-sulfur center of Synechococcus sp. (strain JA-2-3B'a(2-13)) (Cyanobacteria bacterium Yellowstone B-Prime).